The primary structure comprises 229 residues: Orotidine 5'-phosphate decarboxylase (229 aa).

Residues D10, K32, 59 to 68 (DLKFHDIPNT), T119, R180, Q189, G209, and R210 each bind substrate. K61 serves as the catalytic Proton donor.

The protein belongs to the OMP decarboxylase family. Type 1 subfamily. As to quaternary structure, homodimer.

The catalysed reaction is orotidine 5'-phosphate + H(+) = UMP + CO2. Its pathway is pyrimidine metabolism; UMP biosynthesis via de novo pathway; UMP from orotate: step 2/2. In terms of biological role, catalyzes the decarboxylation of orotidine 5'-monophosphate (OMP) to uridine 5'-monophosphate (UMP). The polypeptide is Orotidine 5'-phosphate decarboxylase (Legionella pneumophila subsp. pneumophila (strain Philadelphia 1 / ATCC 33152 / DSM 7513)).